The sequence spans 126 residues: Large ribosomal subunit protein mL55 (126 aa).

A mitochondrion-targeting transit peptide spans 1–34 (MSAKGSLLRLLWQCGMTRAAPESCRYLYTSSWRA). Residue Ser86 is modified to Phosphoserine.

Belongs to the mitochondrion-specific ribosomal protein mL55 family. In terms of assembly, component of the mitochondrial ribosome large subunit (39S) which comprises a 16S rRNA and about 50 distinct proteins.

Its subcellular location is the mitochondrion. The protein is Large ribosomal subunit protein mL55 (MRPL55) of Bos taurus (Bovine).